The chain runs to 811 residues: Phosphoinositide 3-kinase adapter protein 1 (811 aa).

Residues 8–146 (RGCDILIFYS…AVRKAISEDS (139 aa)) enclose the TIR domain. Positions 10–145 (CDILIFYSPD…AAVRKAISED (136 aa)) are necessary and sufficient to mediate inhibition of NF-kappa-B downstream of activated TLRs; may mediate interaction with MYD88 and TIRAP. Positions 146–169 (SGCDSVTDTEPEDERELPFSKQTN) are disordered. Positions 182-318 (VQPDRIRCGA…NIPASGLHLF (137 aa)) constitute a DBB domain. Tyrosine 264 is subject to Phosphotyrosine. Phosphotyrosine; by SYK is present on residues tyrosine 420, tyrosine 445, and tyrosine 460. A Phosphotyrosine; by ABL1 modification is found at tyrosine 513. Residues 525–551 (DLANRPPVPVPRPEASAPGPPPPPDNE) form a disordered region. Over residues 530–550 (PPVPVPRPEASAPGPPPPPDN) the composition is skewed to pro residues. 3 positions are modified to phosphotyrosine; by ABL1: tyrosine 553, tyrosine 570, and tyrosine 594. At serine 642 the chain carries Phosphoserine. Phosphotyrosine; by ABL1 is present on tyrosine 694. The tract at residues 702–811 (VLPARTELRR…PPPPVPPRGR (110 aa)) is disordered. The segment covering 707 to 716 (TELRRGDWKT) has biased composition (basic and acidic residues). A compositionally biased stretch (low complexity) spans 717 to 740 (DSMSSTASSTSNRSSTRSLLSVSS). Serine 718 is subject to Phosphoserine. Residues 801–811 (HPPPPVPPRGR) are compositionally biased toward pro residues.

As to quaternary structure, homooligomer. Interacts (phosphorylated on tyrosine residues within YXXM motifs) with PIK3R1 (via SH2 domain); required for BCR- and TLR-mediated activation of phosphoinositide 3-kinase. Interacts (via polyproline C-terminal region) with ABI1 (via SH3 domain); the interaction promotes phosphorylation of PIK3AP1 by ABL1. May interact with MYD88 and TIRAP. Post-translationally, constitutively phosphorylated. Phosphorylated on tyrosine residues in C-terminal region by ABL1. Phosphorylated on tyrosine residues within the YXXM motifs by BTK and SYK. Isoform 1 and isoform 2 are phosphorylated on tyrosine residues, most likely within the YXXM motifs, via CD19 activation. Toll-like receptor activation induces appearance of a phosphorylated form associated with membranes. In terms of tissue distribution, predominantly expressed in spleen (at protein level). Expressed at lower levels in thymus, liver and lung. Expressed in B-cells, macrophages and natural killer (NK) cells.

It is found in the cytoplasm. The protein resides in the cell membrane. Signaling adapter that contributes to B-cell development by linking B-cell receptor (BCR) signaling to the phosphoinositide 3-kinase (PI3K)-Akt signaling pathway. Has a complementary role to the BCR coreceptor CD19, coupling BCR and PI3K activation by providing a docking site for the PI3K subunit PIK3R1. Alternatively, links Toll-like receptor (TLR) signaling to PI3K activation, a process preventing excessive inflammatory cytokine production. Also involved in the activation of PI3K in natural killer cells. May be involved in the survival of mature B-cells via activation of REL. The sequence is that of Phosphoinositide 3-kinase adapter protein 1 (Pik3ap1) from Mus musculus (Mouse).